A 286-amino-acid polypeptide reads, in one-letter code: Merozoite surface protein 2 (286 aa).

The N-terminal stretch at 1-20 is a signal peptide; it reads MKVIKTLSIINFFIFVTFNI. 2 N-linked (GlcNAc...) asparagine glycosylation sites follow: Asn-22 and Asn-36. Residues 43 to 248 are disordered; sequence MTESKTPTPT…SQKECTDGNK (206 aa). The tract at residues 44–212 is polymorphic region; it reads TESKTPTPTG…EQTESPELQS (169 aa). A compositionally biased stretch (gly residues) spans 54-68; that stretch reads AGAGASGSAGSGDGA. Repeat 1 spans residues 59–68; the sequence is SGSAGSGDGA. Positions 59 to 106 are 5 X 10 AA tandem repeats of S-G-S-A-[GS]-[GS]-[AD]-G-A; sequence SGSAGSGDGASGSASGSASGSASGSAGASGSASGSAGASGSASGSAGA. The stretch at 69–76 is one 2; partial repeat; sequence SGSASGSA. Residues 69-137 are compositionally biased toward low complexity; that stretch reads SGSASGSASG…STSTSSENPN (69 aa). Tandem repeats lie at residues 77-86, 88-96, and 97-106. 2 stretches are compositionally biased toward polar residues: residues 153–179 and 186–214; these read KPNQANKETQNNSNVQQDSQTKSNVPP and KSPTAQPEQAENSAPTAEQTESPELQSAP. Residue Asn-163 is glycosylated (N-linked (GlcNAc...) asparagine). Asn-235 carries an N-linked (GlcNAc...) asparagine glycan. Residues 239–248 are compositionally biased toward basic and acidic residues; that stretch reads SQKECTDGNK. Cys-243 and Cys-251 form a disulfide bridge. Asn-259 and Asn-260 each carry an N-linked (GlcNAc...) asparagine glycan. Asn-260 is lipidated: GPI-anchor amidated asparagine. Positions 261–286 are cleaved as a propeptide — removed in mature form; it reads SSNIASINKFVVLISATLVLSFAIFI.

The protein resides in the cell membrane. May play a role in the merozoite attachment to the erythrocyte. This chain is Merozoite surface protein 2, found in Plasmodium falciparum (isolate 311).